The following is a 256-amino-acid chain: MKINEIKDLLQADSIDPAILAELAKDDRKGVQKLLVSYQRRQEKLAKQKEEFLGRFSYEKDFWAKGQLVGGVDEVGRGPLAGPVVAAAVILPEDFSLLEVNDSKKLSPQKRLALYPKILQEAVAVGVGVMDNKVIDQINIYEADRLAMKQAVEALSTRPDALLVDAMNVPVDLPQLELIKGDAKSNSIAAASIVAKVFRDSLMDDYARLYPDYAFDHNAGYGTKDHLEALRKYGPTPIHRLTFSPVSEMVGLKKAD.

An RNase H type-2 domain is found at 67–255 (QLVGGVDEVG…VSEMVGLKKA (189 aa)). Positions 73, 74, and 165 each coordinate a divalent metal cation.

It belongs to the RNase HII family. Requires Mn(2+) as cofactor. Mg(2+) is required as a cofactor.

It localises to the cytoplasm. It carries out the reaction Endonucleolytic cleavage to 5'-phosphomonoester.. In terms of biological role, endonuclease that specifically degrades the RNA of RNA-DNA hybrids. The protein is Ribonuclease HII of Lactobacillus delbrueckii subsp. bulgaricus (strain ATCC 11842 / DSM 20081 / BCRC 10696 / JCM 1002 / NBRC 13953 / NCIMB 11778 / NCTC 12712 / WDCM 00102 / Lb 14).